Reading from the N-terminus, the 307-residue chain is L-lactate dehydrogenase (307 aa).

NAD(+) is bound by residues valine 13, aspartate 34, arginine 39, tyrosine 64, and 78–79 (GV). Arginine 87 lines the substrate pocket. Serine 100 is a binding site for NAD(+). Position 119 to 122 (119 to 122 (NPVD)) interacts with substrate. Threonine 142 is a binding site for NAD(+). 147–150 (DSAR) contributes to the substrate binding site. Catalysis depends on histidine 174, which acts as the Proton acceptor. Threonine 224 serves as a coordination point for substrate.

This sequence belongs to the LDH/MDH superfamily. LDH family. As to quaternary structure, homotetramer.

It localises to the cytoplasm. The enzyme catalyses (S)-lactate + NAD(+) = pyruvate + NADH + H(+). It functions in the pathway fermentation; pyruvate fermentation to lactate; (S)-lactate from pyruvate: step 1/1. In terms of biological role, catalyzes the conversion of lactate to pyruvate. This is L-lactate dehydrogenase from Lactobacillus delbrueckii subsp. bulgaricus (strain ATCC BAA-365 / Lb-18).